Here is a 215-residue protein sequence, read N- to C-terminus: MKYELTATEARVIGCLLEKQVTTPEQYPLSVNGVVTACNQKTNREPVMNLTEQEVQEQLDNLVKRHFLRTVSGFGNRVTKYEQRFCNSEFGDLKLSAAEVALVTTLLLRGAQTPGELRSRASRMHEFSDMAEVESTLERLASREDGPYVIRLAREPGKRESRYMHLFCGDVDELSLQTSAPESASGDLQSRVEALESEVAELKQRLDSLLAHLGE.

The protein belongs to the UPF0502 family.

The chain is UPF0502 protein YceH from Salmonella schwarzengrund (strain CVM19633).